The sequence spans 317 residues: Taste receptor type 2 member 14 (317 aa).

Over 1–7 the chain is Extracellular; sequence MGGVIKS. Residues 8-28 form a helical membrane-spanning segment; that stretch reads IFTFVLIVEFIIGNLGNSFIA. Over 29–55 the chain is Cytoplasmic; the sequence is LVNCIDWVKGRKISSVDRILTALAISR. Residues 56–76 traverse the membrane as a helical segment; sequence ISLVWLIFGSWCVSVFFPALF. The Extracellular segment spans residues 77–87; sequence ATEKMFRMLTN. The cholesterol site is built by Thr-86 and Trp-89. The helical transmembrane segment at 88–108 threads the bilayer; that stretch reads IWTVINHFSVWLATGLGTFYF. The Cytoplasmic portion of the chain corresponds to 109-129; that stretch reads LKIANFSNSIFLYLKWRVKKV. Residues 130-150 traverse the membrane as a helical segment; it reads VLVLLLVTSVFLFLNIALINI. At 151 to 184 the chain is on the extracellular side; that stretch reads HINASINGYRRNKTCSSDSSNFTRFSSLIVLTST. N-linked (GlcNAc...) asparagine glycans are attached at residues Asn-153, Asn-162, and Asn-171. Val-180 is a binding site for cholesterol. A helical transmembrane segment spans residues 185–205; sequence VFIFIPFTLSLAMFLLLIFSM. The Cytoplasmic segment spans residues 206 to 232; it reads WKHRKKMQHTVKISGDASTKAHRGVKS. A helical membrane pass occupies residues 233 to 253; it reads VITFFLLYAIFSLSFFISVWT. Residues 254-261 are Extracellular-facing; it reads SERLEENL. The chain crosses the membrane as a helical span at residues 262–282; the sequence is IILSQVMGMAYPSCHSCVLIL. Positions 265 and 268 each coordinate cholesterol. Over 283-317 the chain is Cytoplasmic; that stretch reads GNKKLRQASLSVLLWLRYMFKDGEPSGHKEFRESS.

It belongs to the G-protein coupled receptor T2R family. Core component of the TAS2R14-GNAI1 complex, consisting of TAS2R14, GNAI1, GNB1 and GNG2; within the complex interacts with GNAI1. Core component of the TAS2R14-GNAT3 complex, consisting of TAS2R14, GNAT3, GNB1 and GNG2; within the complex interacts with GNAT3. Core component of the TAS2R14-GNAS2 complex, consisting of TAS2R14, GNAS2, GNB1 and GNG2; within the complex interacts with GNAS2. In terms of tissue distribution, highly expressed in cerebellum, pancreas, small intestine and thymus; also expressed in adipose, aorta, skin and tongue, but at significantly lower levels. Expressed in subsets of taste receptor cells of the tongue and palate epithelium and exclusively in gustducin-positive cells. Expressed in testis.

It localises to the membrane. The enzyme catalyses Ca(2+)(in) = Ca(2+)(out). It catalyses the reaction 3',5'-cyclic AMP(in) = 3',5'-cyclic AMP(out). With respect to regulation, basal activity is enhanced by binding to bitter tastants, such as flufenamic acid and aristolochic acid. Regulated by cholesterol in a concentration-dependent manner. In terms of biological role, gustducin-linked G-protein coupled receptor that plays a role in the perception of bitterness. The activity of this receptor stimulates GNAT3, activating the gustducin G-protein pathway. Likely plays a role in sensing the chemical composition of the gastrointestinal content and other extra-oral tissues via the inhibitory G-protein pathways. The chain is Taste receptor type 2 member 14 (TAS2R14) from Homo sapiens (Human).